The chain runs to 660 residues: Leucine-rich repeat transmembrane protein FLRT2 (660 aa).

The first 35 residues, 1 to 35 (MGLQTTKWPGRGAFILKFWLIISLGLYLQVSKLLA), serve as a signal peptide directing secretion. 2 disulfide bridges follow: C36–C42 and C40–C49. One can recognise an LRRNT domain in the interval 36 to 63 (CPSVCRCDRNFVYCNERSLTSVPLGIPE). The Extracellular portion of the chain corresponds to 36–540 (CPSVCRCDRN…QTTSHSMGSP (505 aa)). 10 LRR repeats span residues 62–87 (PEGV…LHNV), 88–108 (QSVH…MNLP), 109–131 (KNVR…ALAQ), 132–157 (LLKL…AFRE), 159–181 (ISLK…LPVD), 183–202 (QELR…AFQN), 203–228 (LTSL…TFSH), 229–251 (LTKL…DLPG), 252–274 (THLI…AFAN), and 275–298 (LRKL…VFDH). N202 carries an N-linked (GlcNAc...) asparagine glycan. An LRRCT domain is found at 310 to 362 (NPWFCDCSIKWVTEWLKYIPSSLNVRGFMCQGPEQVRGMAVRELNMNLLSCPT). Cystine bridges form between C314-C339 and C316-C360. A compositionally biased stretch (low complexity) spans 371–396 (TPAPSTVSPTTQSPTLSVPSPSRGSV). The tract at residues 371-413 (TPAPSTVSPTTQSPTLSVPSPSRGSVPPAPTPSKLPTIPDWDG) is disordered. The Fibronectin type-III domain maps to 419–517 (PPISERIQLS…ICSEATTHAS (99 aa)). The chain crosses the membrane as a helical span at residues 541-561 (FLLAGLIGGAVIFVLVVLLSV). Residues 562 to 660 (FCWHMHKKGR…SVPDLEHCHT (99 aa)) are Cytoplasmic-facing.

In terms of assembly, self-associates (via leucine-rich repeats), giving rise to homooligomers. Interacts with FGFR1. Interacts with FGFR2. Interacts (via extracellular domain) with ADGRL1/LPHN1. Interacts (via extracellular domain) with ADGRL3 (via olfactomedin-like domain). Interacts (via extracellular domain) with UNC5D (via the first Ig-like domain). Can also interact (via extracellular domain) with UNC5B, but with much lower affinity. Interacts (via extracellular domain) with FN1. In terms of processing, N-glycosylated. Post-translationally, proteolytic cleavage in the juxtamembrane region gives rise to a soluble ectodomain. Cleavage is probably effected by a metalloprotease. Detected in adult brain (at protein level).

Its subcellular location is the cell membrane. The protein localises to the endoplasmic reticulum membrane. It is found in the cell junction. It localises to the focal adhesion. The protein resides in the secreted. Its subcellular location is the extracellular space. The protein localises to the extracellular matrix. It is found in the synapse. It localises to the synaptosome. The protein resides in the microsome membrane. In terms of biological role, functions in cell-cell adhesion, cell migration and axon guidance. Mediates cell-cell adhesion via its interactions with ADGRL3 and probably also other latrophilins that are expressed at the surface of adjacent cells. May play a role in the migration of cortical neurons during brain development via its interaction with UNC5D. Mediates axon growth cone collapse and plays a repulsive role in neuron guidance via its interaction with UNC5D, and possibly also other UNC-5 family members. Plays a role in fibroblast growth factor-mediated signaling cascades. Required for normal organization of the cardiac basement membrane during embryogenesis, and for normal embryonic epicardium and heart morphogenesis. The chain is Leucine-rich repeat transmembrane protein FLRT2 from Mus musculus (Mouse).